The sequence spans 430 residues: Aspartate aminotransferase, mitochondrial (430 aa).

A mitochondrion-targeting transit peptide spans 1–29 (MALLHSGRVLSGIAAAFHPGLAAAASARA). Thr-48 is modified (phosphothreonine). Residue Lys-59 is modified to N6-acetyllysine. A substrate-binding site is contributed by Gly-65. Lys-73 is modified (N6-acetyllysine; alternate). Lys-73 bears the N6-succinyllysine; alternate mark. Lys-82 carries the N6-acetyllysine modification. Lys-90 carries the N6-acetyllysine; alternate modification. Lys-90 is subject to N6-succinyllysine; alternate. Residue Tyr-96 is modified to 3'-nitrotyrosine; alternate. Tyr-96 is subject to Phosphotyrosine; alternate. An N6-acetyllysine; alternate mark is found at Lys-107 and Lys-122. N6-succinyllysine; alternate is present on residues Lys-107 and Lys-122. Ser-143 carries the phosphoserine modification. N6-acetyllysine; alternate is present on Lys-159. N6-succinyllysine; alternate is present on Lys-159. Substrate is bound at residue Trp-162. An N6-acetyllysine; alternate modification is found at Lys-185. Lys-185 bears the N6-succinyllysine; alternate mark. Substrate is bound at residue Asn-215. Position 227 is an N6-succinyllysine (Lys-227). Lys-234 carries the post-translational modification N6-acetyllysine. Residues Lys-279 and Lys-296 each carry the N6-acetyllysine; alternate modification. At Lys-279 the chain carries N6-(pyridoxal phosphate)lysine; alternate. An N6-succinyllysine; alternate modification is found at Lys-296. Lys-302 is subject to N6-acetyllysine. Position 309 is an N6-acetyllysine; alternate (Lys-309). Lys-309 carries the N6-succinyllysine; alternate modification. Arg-313 carries the post-translational modification Asymmetric dimethylarginine. Thr-333 is subject to Phosphothreonine. Lys-338 carries the post-translational modification N6-acetyllysine; alternate. The residue at position 338 (Lys-338) is an N6-succinyllysine; alternate. N6-acetyllysine is present on Lys-345. The residue at position 363 (Lys-363) is an N6-acetyllysine; alternate. Position 363 is an N6-succinyllysine; alternate (Lys-363). N6-acetyllysine is present on residues Lys-364 and Lys-387. An N6-acetyllysine; alternate mark is found at Lys-396 and Lys-404. N6-succinyllysine; alternate is present on residues Lys-396 and Lys-404. Arg-407 is a substrate binding site.

Belongs to the class-I pyridoxal-phosphate-dependent aminotransferase family. In terms of assembly, homodimer. Pyridoxal 5'-phosphate is required as a cofactor.

Its subcellular location is the mitochondrion matrix. The protein resides in the cell membrane. It catalyses the reaction L-aspartate + 2-oxoglutarate = oxaloacetate + L-glutamate. The enzyme catalyses L-kynurenine + 2-oxoglutarate = kynurenate + L-glutamate + H2O. Catalyzes the irreversible transamination of the L-tryptophan metabolite L-kynurenine to form kynurenic acid (KA). As a member of the malate-aspartate shuttle, it has a key role in the intracellular NAD(H) redox balance. Is important for metabolite exchange between mitochondria and cytosol, and for amino acid metabolism. Facilitates cellular uptake of long-chain free fatty acids. This chain is Aspartate aminotransferase, mitochondrial (GOT2), found in Macaca fascicularis (Crab-eating macaque).